Here is a 76-residue protein sequence, read N- to C-terminus: Omega-conotoxin-like TeAr94 (76 aa).

The first 22 residues, 1-22, serve as a signal peptide directing secretion; sequence MKLTCMMIVAVLFLTAWTFVTA. Residues 23-50 constitute a propeptide that is removed on maturation; the sequence is VPHSSNALENLYLKAHHEMNNPEDSELN. 3 disulfide bridges follow: C53–C67, C60–C71, and C66–C75.

This sequence belongs to the conotoxin O1 superfamily. Expressed by the venom duct.

Its subcellular location is the secreted. Omega-conotoxins act at presynaptic membranes, they bind and block voltage-gated calcium channels. This chain is Omega-conotoxin-like TeAr94, found in Conus textile (Cloth-of-gold cone).